A 337-amino-acid chain; its full sequence is Low-density lipoprotein receptor class A domain-containing protein 3 (337 aa).

The signal sequence occupies residues 1–13 (MWLLYLILGSVES). The Extracellular portion of the chain corresponds to 14–169 (QLLPGNNHTT…NQLLYYPSIT (156 aa)). A glycan (N-linked (GlcNAc...) asparagine) is linked at asparagine 20. 3 LDL-receptor class A domains span residues 24 to 61 (ECNI…KECP), 66 to 103 (RCGP…ENCT), and 108 to 144 (LCSN…EHCH). 9 disulfide bridges follow: cysteine 25-cysteine 38, cysteine 33-cysteine 51, cysteine 45-cysteine 60, cysteine 67-cysteine 80, cysteine 74-cysteine 93, cysteine 87-cysteine 102, cysteine 109-cysteine 121, cysteine 116-cysteine 134, and cysteine 128-cysteine 143. Asparagine 101 carries N-linked (GlcNAc...) asparagine glycosylation. Residues 170 to 190 (YTIIGSSVIFVLVVALLALVL) traverse the membrane as a helical segment. Over 191–337 (HHQRKRNLMS…DDLPSTEVDV (147 aa)) the chain is Cytoplasmic. Positions 243 to 253 (QQPVSVESPPS) are enriched in polar residues. Residues 243–337 (QQPVSVESPP…DDLPSTEVDV (95 aa)) are disordered. Positions 291 to 303 (RSRTGSSASAGST) are enriched in low complexity.

It belongs to the LDLR family.

It localises to the cell membrane. This chain is Low-density lipoprotein receptor class A domain-containing protein 3, found in Xenopus tropicalis (Western clawed frog).